Consider the following 382-residue polypeptide: Galactokinase (382 aa).

Position 34–37 (34–37) interacts with substrate; the sequence is EHTD. 124-130 contacts ATP; the sequence is GAGLSSS. Residues Ser130 and Glu162 each contribute to the Mg(2+) site. Asp174 acts as the Proton acceptor in catalysis. Residue Tyr223 participates in substrate binding.

It belongs to the GHMP kinase family. GalK subfamily.

The protein localises to the cytoplasm. The enzyme catalyses alpha-D-galactose + ATP = alpha-D-galactose 1-phosphate + ADP + H(+). The protein operates within carbohydrate metabolism; galactose metabolism. Catalyzes the transfer of the gamma-phosphate of ATP to D-galactose to form alpha-D-galactose-1-phosphate (Gal-1-P). This is Galactokinase from Escherichia coli O1:K1 / APEC.